Reading from the N-terminus, the 239-residue chain is Protein Thf1 (239 aa).

Residues E183 to R219 are a coiled coil. The span at K211–Q221 shows a compositional bias: basic and acidic residues. A disordered region spans residues K211–G239.

This sequence belongs to the THF1 family.

Functionally, may be involved in photosynthetic membrane biogenesis. The sequence is that of Protein Thf1 from Synechococcus sp. (strain JA-3-3Ab) (Cyanobacteria bacterium Yellowstone A-Prime).